The following is a 365-amino-acid chain: Endophilin-B1 (365 aa).

Position 1 is an N-acetylmethionine (M1). Positions 1–30 are membrane-binding amphipathic helix; that stretch reads MNIMDFNVKKLAADAGTFLSRAVQFTEEKL. Residues 1–37 form a required for membrane binding region; it reads MNIMDFNVKKLAADAGTFLSRAVQFTEEKLGQAEKTE. Residues 27 to 261 enclose the BAR domain; it reads EEKLGQAEKT…LGSFPSNYVS (235 aa). T145 is modified (phosphothreonine; by CDK5). Residues 156 to 185 adopt a coiled-coil conformation; it reads KTIAKERKLLQNKRLDLDAAKTRLKKAKAA. Residues 305–365 enclose the SH3 domain; the sequence is SSTRKARVLY…VPITYLELLN (61 aa).

Belongs to the endophilin family. In terms of assembly, homodimer, and heterodimer with SH3GLB2. Binds BAX; induction of apoptosis augments BAX binding. Binds DNM1, HTT, AMPH, BIN1 and ARFGAP1. Interacts with UVRAG; UVRAG bridges the interaction to BECN1 indicative for an association with the PI3K complex II (PI3KC3-C2). Phosphorylated at Thr-145 by CDK5; this phosphorylation is required for autophagy induction in starved neurons and facilitates homodimerization. Expressed in brain, heart, lung and spleen. Low level in liver and testis.

The protein localises to the cytoplasm. Its subcellular location is the golgi apparatus membrane. It is found in the mitochondrion outer membrane. The protein resides in the cytoplasmic vesicle. It localises to the autophagosome membrane. The protein localises to the midbody. Its function is as follows. May be required for normal outer mitochondrial membrane dynamics. Required for coatomer-mediated retrograde transport in certain cells. May recruit other proteins to membranes with high curvature. May promote membrane fusion. Involved in activation of caspase-dependent apoptosis by promoting BAX/BAK1 activation. Involved in caspase-independent apoptosis during nutrition starvation and involved in the regulation of autophagy. Activates lipid kinase activity of PIK3C3 during autophagy probably by associating with the PI3K complex II (PI3KC3-C2). Associated with PI3KC3-C2 during autophagy may regulate the trafficking of ATG9A from the Golgi complex to the peripheral cytoplasm for the formation of autophagosomes by inducing Golgi membrane tubulation and fragmentation. Involved in regulation of degradative endocytic trafficking and cytokinesis, probably in the context of PI3KC3-C2. This chain is Endophilin-B1, found in Rattus norvegicus (Rat).